A 151-amino-acid chain; its full sequence is Macrodomain Ter protein (151 aa).

The protein belongs to the MatP family. As to quaternary structure, homodimer.

Its subcellular location is the cytoplasm. Its function is as follows. Required for spatial organization of the terminus region of the chromosome (Ter macrodomain) during the cell cycle. Prevents early segregation of duplicated Ter macrodomains during cell division. Binds specifically to matS, which is a 13 bp signature motif repeated within the Ter macrodomain. The sequence is that of Macrodomain Ter protein from Photorhabdus laumondii subsp. laumondii (strain DSM 15139 / CIP 105565 / TT01) (Photorhabdus luminescens subsp. laumondii).